The primary structure comprises 519 residues: Cytosol aminopeptidase (519 aa).

The residue at position 42 (Ser42) is a Phosphoserine. At Lys45 the chain carries N6-succinyllysine. Phosphoserine is present on Ser54. N6-succinyllysine occurs at positions 61 and 103. Phosphoserine is present on residues Ser180 and Ser194. Zn(2+) contacts are provided by Leu202, Met203, and Thr205. An N6-acetyllysine; alternate modification is found at Lys221. Residue Lys221 is modified to N6-succinyllysine; alternate. Ser238 is modified (phosphoserine). Positions 282 and 287 each coordinate Zn(2+). 4 residues coordinate substrate: Lys282, Asp287, Ser292, and Lys294. Asp287 is a binding site for Mg(2+). Residue Lys294 is part of the active site. 4 residues coordinate Zn(2+): Arg303, Asp305, Asp364, and Glu366. Positions 305 and 364 each coordinate substrate. 2 residues coordinate Mg(2+): Asp364 and Glu366. Arg368 is a catalytic residue. Residue Lys455 is modified to N6-acetyllysine; alternate. The residue at position 455 (Lys455) is an N6-succinyllysine; alternate. Lys476 carries the N6-succinyllysine modification. The residue at position 489 (Lys489) is an N6-acetyllysine; alternate. Lys489 carries the N6-succinyllysine; alternate modification.

The protein belongs to the peptidase M17 family. In terms of assembly, homohexamer. Requires Zn(2+) as cofactor. The cofactor is Mn(2+).

It localises to the cytoplasm. The catalysed reaction is Release of an N-terminal amino acid, Xaa-|-Yaa-, in which Xaa is preferably Leu, but may be other amino acids including Pro although not Arg or Lys, and Yaa may be Pro. Amino acid amides and methyl esters are also readily hydrolyzed, but rates on arylamides are exceedingly low.. It carries out the reaction an S-substituted L-cysteinylglycine + H2O = an S-substituted L-cysteine + glycine. The enzyme catalyses L-cysteinylglycine + H2O = L-cysteine + glycine. It catalyses the reaction S-benzyl-L-cysteinylglycine + H2O = S-benzyl-L-cysteine + glycine. The catalysed reaction is Release of N-terminal proline from a peptide.. Cytosolic metallopeptidase that catalyzes the removal of unsubstituted N-terminal hydrophobic amino acids from various peptides. The presence of Zn(2+) ions is essential for the peptidase activity, and the association with other cofactors can modulate the substrate spectificity of the enzyme. For instance, in the presence of Mn(2+), it displays a specific Cys-Gly hydrolyzing activity of Cys-Gly-S-conjugates. Involved in the metabolism of glutathione and in the degradation of glutathione S-conjugates, which may play a role in the control of the cell redox status. The polypeptide is Cytosol aminopeptidase (Homo sapiens (Human)).